Consider the following 288-residue polypeptide: Quinate/shikimate dehydrogenase (288 aa).

Substrate-binding residues include Lys71 and Asp107. NAD(+)-binding positions include 132–135 (AGGA), 155–158 (NRRD), Lys205, 232–235 (CVYN), and Gly255.

Belongs to the shikimate dehydrogenase family. As to quaternary structure, homodimer.

The enzyme catalyses L-quinate + NAD(+) = 3-dehydroquinate + NADH + H(+). It carries out the reaction L-quinate + NADP(+) = 3-dehydroquinate + NADPH + H(+). The catalysed reaction is shikimate + NADP(+) = 3-dehydroshikimate + NADPH + H(+). It catalyses the reaction shikimate + NAD(+) = 3-dehydroshikimate + NADH + H(+). It participates in metabolic intermediate biosynthesis; chorismate biosynthesis; chorismate from D-erythrose 4-phosphate and phosphoenolpyruvate: step 4/7. The actual biological function of YdiB remains unclear, nor is it known whether 3-dehydroshikimate or quinate represents the natural substrate. Catalyzes the reversible NAD-dependent reduction of both 3-dehydroshikimate (DHSA) and 3-dehydroquinate to yield shikimate (SA) and quinate, respectively. It can use both NAD or NADP for catalysis, however it has higher catalytic efficiency with NAD. This Escherichia coli O17:K52:H18 (strain UMN026 / ExPEC) protein is Quinate/shikimate dehydrogenase.